We begin with the raw amino-acid sequence, 156 residues long: Small ribosomal subunit protein uS7 (156 aa).

The protein belongs to the universal ribosomal protein uS7 family. As to quaternary structure, part of the 30S ribosomal subunit. Contacts proteins S9 and S11.

Its function is as follows. One of the primary rRNA binding proteins, it binds directly to 16S rRNA where it nucleates assembly of the head domain of the 30S subunit. Is located at the subunit interface close to the decoding center, probably blocks exit of the E-site tRNA. This is Small ribosomal subunit protein uS7 from Pseudoalteromonas translucida (strain TAC 125).